The chain runs to 357 residues: Probable cinnamyl alcohol dehydrogenase (357 aa).

Zn(2+) is bound at residue cysteine 47. Threonine 49 contacts NADP(+). The Zn(2+) site is built by histidine 69, glutamate 70, cysteine 100, cysteine 103, cysteine 106, cysteine 114, and cysteine 163. NADP(+)-binding positions include threonine 167, 188-193 (GLGGVG), 211-216 (SSSDKK), threonine 251, glycine 275, and 298-300 (SFI).

Belongs to the zinc-containing alcohol dehydrogenase family. Homodimer. Zn(2+) serves as cofactor.

The enzyme catalyses (E)-cinnamyl alcohol + NADP(+) = (E)-cinnamaldehyde + NADPH + H(+). The catalysed reaction is (E)-coniferol + NADP(+) = (E)-coniferaldehyde + NADPH + H(+). It catalyses the reaction (E)-sinapyl alcohol + NADP(+) = (E)-sinapaldehyde + NADPH + H(+). It carries out the reaction (E)-4-coumaroyl alcohol + NADP(+) = (E)-4-coumaraldehyde + NADPH + H(+). The enzyme catalyses (E)-caffeyl alcohol + NADP(+) = (E)-caffeyl aldehyde + NADPH + H(+). Its pathway is aromatic compound metabolism; phenylpropanoid biosynthesis. Its function is as follows. Involved in lignin biosynthesis. Catalyzes the final step specific for the production of lignin monomers. Catalyzes the NADPH-dependent reduction of coniferaldehyde, 5-hydroxyconiferaldehyde, sinapaldehyde, 4-coumaraldehyde and caffeyl aldehyde to their respective alcohols. This chain is Probable cinnamyl alcohol dehydrogenase, found in Populus deltoides (Eastern poplar).